A 151-amino-acid polypeptide reads, in one-letter code: UPF0756 membrane protein Hore_21770 (151 aa).

The next 5 membrane-spanning stretches (helical) occupy residues 7-29, 49-69, 84-104, 110-130, and 131-151; these read LLIITILGFLARSRVLVIAGLLL, IEIGLIFLLMAILSSLVLSPV, TVAIIAGVLATKFNGMGLDLL, FILGIIMGSLVGIVFFGGIPV, and GPLMAAGIGAVLFKIIEIIKG.

It belongs to the UPF0756 family.

It localises to the cell membrane. The protein is UPF0756 membrane protein Hore_21770 of Halothermothrix orenii (strain H 168 / OCM 544 / DSM 9562).